The sequence spans 77 residues: U8-lycotoxin-Ls1e (77 aa).

The first 20 residues, 1–20 (MKLIIFTGLVLFAIVSLIEA), serve as a signal peptide directing secretion. A propeptide spanning residues 21 to 26 (QAENEK) is cleaved from the precursor.

This sequence belongs to the neurotoxin 19 (CSTX) family. 08 (U8-Lctx) subfamily. Contains 4 disulfide bonds. As to expression, expressed by the venom gland.

It is found in the secreted. The protein is U8-lycotoxin-Ls1e of Lycosa singoriensis (Wolf spider).